The chain runs to 140 residues: Nucleoside diphosphate kinase (140 aa).

The ATP site is built by Lys-10, Phe-58, Arg-86, Thr-92, Arg-103, and Asn-113. His-116 functions as the Pros-phosphohistidine intermediate in the catalytic mechanism.

Belongs to the NDK family. As to quaternary structure, homohexamer. The cofactor is Mg(2+).

It localises to the cytoplasm. It catalyses the reaction a 2'-deoxyribonucleoside 5'-diphosphate + ATP = a 2'-deoxyribonucleoside 5'-triphosphate + ADP. It carries out the reaction a ribonucleoside 5'-diphosphate + ATP = a ribonucleoside 5'-triphosphate + ADP. Major role in the synthesis of nucleoside triphosphates other than ATP. The ATP gamma phosphate is transferred to the NDP beta phosphate via a ping-pong mechanism, using a phosphorylated active-site intermediate. This Methanocaldococcus jannaschii (strain ATCC 43067 / DSM 2661 / JAL-1 / JCM 10045 / NBRC 100440) (Methanococcus jannaschii) protein is Nucleoside diphosphate kinase.